We begin with the raw amino-acid sequence, 202 residues long: Tetranectin (202 aa).

The first 21 residues, M1–A21, serve as a signal peptide directing secretion. 3 disulfides stabilise this stretch: C71–C81, C98–C197, and C173–C189. The 122-residue stretch at V77–Q198 folds into the C-type lectin domain.

As to quaternary structure, homotrimer.

Its subcellular location is the secreted. Tetranectin binds to plasminogen and to isolated kringle 4. May be involved in the packaging of molecules destined for exocytosis. Plays a role in retinal function. The sequence is that of Tetranectin (CLEC3B) from Bos taurus (Bovine).